Here is a 288-residue protein sequence, read N- to C-terminus: Chitinase 5 (288 aa).

An N-terminal signal peptide occupies residues 1–29 (MANSPTPTMLAFLALGLALLLSATGQASA). In terms of domain architecture, Chitin-binding type-1 spans 30 to 64 (QNCGCQSNMCCSKWGYCGTGKDYCGDGCRSGPCYG). Intrachain disulfides connect C32-C40, C34-C46, C39-C53, C57-C62, C107-C156, C169-C178, and C256-C288. Catalysis depends on E151, which acts as the Proton donor.

The protein belongs to the glycosyl hydrolase 19 family. Chitinase class IV subfamily. As to expression, expressed in sheaths and meristems and at lower levels in roots and leaves.

It carries out the reaction Random endo-hydrolysis of N-acetyl-beta-D-glucosaminide (1-&gt;4)-beta-linkages in chitin and chitodextrins.. Its function is as follows. May function in reproductive organs during embryogenesis and seed maturation. This is Chitinase 5 (Cht5) from Oryza sativa subsp. japonica (Rice).